The following is a 969-amino-acid chain: Vacuolar membrane protease (969 aa).

Over 1–12 (MTRVNSIIGFRP) the chain is Cytoplasmic. Residues 13–33 (IPVTLLTVITYVSLFSALLFI) form a helical membrane-spanning segment. Residues 34 to 381 (DRQPPAVAKK…RAFSVLHLHT (348 aa)) lie on the Vacuolar side of the membrane. An N-linked (GlcNAc...) asparagine glycan is attached at Asn125. Zn(2+) is bound by residues His166 and Asp178. Glu216 serves as the catalytic Proton acceptor. The Zn(2+) site is built by Glu217, Glu242, and His315. N-linked (GlcNAc...) asparagine glycosylation occurs at Asn355. A helical membrane pass occupies residues 382 to 402 (IFAFTITLIVVPFVVVLVAMW). Residues 403 to 438 (ALGHFDKLYFFSNTAYIPPPPEHSIASRTTQGWRGV) lie on the Cytoplasmic side of the membrane. Residues 439 to 459 (LRFPVAFVAASAGVVGMAFLI) form a helical membrane-spanning segment. The Vacuolar segment spans residues 460–469 (NKINPMVVYA). The helical transmembrane segment at 470–490 (SQYTVWTCFLSTWWIIAWVIL) threads the bilayer. The Cytoplasmic portion of the chain corresponds to 491 to 505 (RGADAVRPTALARGY). The chain crosses the membrane as a helical span at residues 506 to 526 (GFLEQWLLWLVAMIGVAISIG). At 527-531 (KSHLG) the chain is on the vacuolar side. The chain crosses the membrane as a helical span at residues 532–552 (SGYWVLVFYSGFFTSAFISLL). Residues 553–662 (EMAALQKKSE…WSKDLPSWTW (110 aa)) lie on the Cytoplasmic side of the membrane. Residues 571 to 629 (DQAYPPEEHSQTGASGNISNRAANDDDDAGEHATEETPLFRGPNRPLSFAPHRNPRYDN) form a disordered region. Positions 581-592 (QTGASGNISNRA) are enriched in polar residues. The helical transmembrane segment at 663 to 683 (ILQFLATVPLQLVLAGSVALL) threads the bilayer. Over 684–698 (LGNALAQTGADGSDM) the chain is Vacuolar. A helical transmembrane segment spans residues 699–719 (LTVLLGFGVFSIILLLPVAPF). Residues 720-727 (LHRITYHV) are Cytoplasmic-facing. The chain crosses the membrane as a helical span at residues 728-748 (TLFIFVIFVGTFIYNLAAPPF). Over 749–969 (SPNARLKVYF…LVEGSVPFMI (221 aa)) the chain is Vacuolar. A glycan (N-linked (GlcNAc...) asparagine) is linked at Asn840.

This sequence belongs to the peptidase M28 family. The cofactor is Zn(2+).

The protein resides in the vacuole membrane. Its function is as follows. May be involved in vacuolar sorting and osmoregulation. The sequence is that of Vacuolar membrane protease from Tuber melanosporum (strain Mel28) (Perigord black truffle).